The following is a 328-amino-acid chain: Radiation response metalloprotease IrrE (328 aa).

The tract at residues methionine 1 to histidine 31 is disordered. Histidine 118 is a binding site for Zn(2+). Residue glutamate 119 is part of the active site. Positions 122 and 149 each coordinate Zn(2+). Disordered stretches follow at residues proline 217–arginine 238 and arginine 309–glutamine 328.

In terms of biological role, plays a central regulatory role in DNA repair and protection pathways in response to radiation stress. Acts as a site-specific metalloprotease that cleaves and inactivates the repressor protein DdrO, resulting in induced expression of genes required for DNA repair and cell survival after exposure to radiation. Regulates the expression of dozens of proteins from different pathways, including the important DNA repair proteins RecA and PprA. Binds to the promoters of recA and pprA. The chain is Radiation response metalloprotease IrrE from Deinococcus radiodurans (strain ATCC 13939 / DSM 20539 / JCM 16871 / CCUG 27074 / LMG 4051 / NBRC 15346 / NCIMB 9279 / VKM B-1422 / R1).